Consider the following 812-residue polypeptide: Plasminogen (812 aa).

The signal sequence occupies residues 1 to 19; that stretch reads MDHKEVILLFLLLLKPGQG. Positions 20–98 constitute a PAN domain; the sequence is DSLDGYISTQ…RDVILFEKRV (79 aa). 21 cysteine pairs are disulfide-bonded: Cys49–Cys73, Cys53–Cys61, Cys103–Cys181, Cys124–Cys164, Cys152–Cys176, Cys185–Cys262, Cys188–Cys316, Cys206–Cys245, Cys234–Cys257, Cys275–Cys352, Cys296–Cys335, Cys324–Cys347, Cys377–Cys454, Cys398–Cys437, Cys426–Cys449, Cys481–Cys560, Cys502–Cys543, Cys531–Cys555, Cys568–Cys687, Cys578–Cys586, and Cys609–Cys625. 5 Kringle domains span residues 103-181, 184-262, 275-352, 377-454, and 481-560; these read CKTG…IPEC, ECMY…IPRC, CLKG…IPSC, CYQS…LKRC, and CMYG…IPLC. The region spanning 582-810 is the Peptidase S1 domain; that stretch reads VVGGCVANPH…FVDWIEREMR (229 aa). Phosphoserine is present on Ser598. Active-site charge relay system residues include His624 and Asp667. Ser690 is modified (phosphoserine). 3 disulfide bridges follow: Cys701–Cys768, Cys731–Cys747, and Cys758–Cys786. Catalysis depends on Ser762, which acts as the Charge relay system.

It belongs to the peptidase S1 family. Plasminogen subfamily. In terms of assembly, interacts (both mature PLG and the angiostatin peptide) with AMOT and CSPG4. Interacts (via the Kringle domains) with HRG; the interaction tethers PLG to the cell surface and enhances its activation. Interacts (via Kringle 4 domain) with ADA; the interaction stimulates PLG activation when in complex with DPP4. Angiostatin: Interacts with ATP5F1A; the interaction inhibits most of the angiogenic effects of angiostatin. In terms of processing, in the presence of the inhibitor, the activation involves only cleavage after Arg-581, yielding two chains held together by two disulfide bonds. In the absence of the inhibitor, the activation involves additionally the removal of the activation peptide.

It localises to the secreted. It carries out the reaction Preferential cleavage: Lys-|-Xaa &gt; Arg-|-Xaa, higher selectivity than trypsin. Converts fibrin into soluble products.. Converted into plasmin by plasminogen activators, both plasminogen and its activator being bound to fibrin. Cannot be activated with streptokinase. In terms of biological role, plasmin dissolves the fibrin of blood clots and acts as a proteolytic factor in a variety of other processes including embryonic development, tissue remodeling, tumor invasion, and inflammation. In ovulation, weakens the walls of the Graafian follicle. It activates the urokinase-type plasminogen activator, collagenases and several complement zymogens, such as C1, C4 and C5. Cleavage of fibronectin and laminin leads to cell detachment and apoptosis. Also cleaves fibrin, thrombospondin and von Willebrand factor. Its role in tissue remodeling and tumor invasion may be modulated by CSPG4. Binds to cells. Functionally, angiostatin is an angiogenesis inhibitor that blocks neovascularization and growth of experimental primary and metastatic tumors in vivo. This chain is Plasminogen (Plg), found in Mus musculus (Mouse).